Consider the following 554-residue polypeptide: Eukaryotic translation initiation factor 3 subunit D-2 (554 aa).

Residues 291–305 (QFDLLTVNETALEPP) are RNA gate. The tract at residues 530-554 (NAFDSDGNEDEETSEDRPFLKSMAN) is disordered.

The protein belongs to the eIF-3 subunit D family. Component of the eukaryotic translation initiation factor 3 (eIF-3) complex. The eIF-3 complex interacts with pix.

The protein resides in the cytoplasm. Functionally, mRNA cap-binding component of the eukaryotic translation initiation factor 3 (eIF-3) complex, which is involved in protein synthesis of a specialized repertoire of mRNAs and, together with other initiation factors, stimulates binding of mRNA and methionyl-tRNAi to the 40S ribosome. The eIF-3 complex specifically targets and initiates translation of a subset of mRNAs involved in cell proliferation. In the eIF-3 complex, eif3d specifically recognizes and binds the 7-methylguanosine cap of a subset of mRNAs. The chain is Eukaryotic translation initiation factor 3 subunit D-2 from Drosophila mojavensis (Fruit fly).